A 37-amino-acid polypeptide reads, in one-letter code: Large ribosomal subunit protein bL36c (37 aa).

The protein belongs to the bacterial ribosomal protein bL36 family.

It is found in the plastid. The protein resides in the chloroplast. This chain is Large ribosomal subunit protein bL36c, found in Piper cenocladum (Ant piper).